Reading from the N-terminus, the 474-residue chain is L-arabinose isomerase (474 aa).

The Mn(2+) site is built by Glu306, Glu331, His348, and His447.

This sequence belongs to the arabinose isomerase family. It depends on Mn(2+) as a cofactor.

The enzyme catalyses beta-L-arabinopyranose = L-ribulose. The protein operates within carbohydrate degradation; L-arabinose degradation via L-ribulose; D-xylulose 5-phosphate from L-arabinose (bacterial route): step 1/3. Its function is as follows. Catalyzes the conversion of L-arabinose to L-ribulose. This chain is L-arabinose isomerase, found in Levilactobacillus brevis (strain ATCC 367 / BCRC 12310 / CIP 105137 / JCM 1170 / LMG 11437 / NCIMB 947 / NCTC 947) (Lactobacillus brevis).